The primary structure comprises 227 residues: Cytidylate kinase (227 aa).

12–20 provides a ligand contact to ATP; sequence GPSGAGKGT.

The protein belongs to the cytidylate kinase family. Type 1 subfamily.

The protein resides in the cytoplasm. The catalysed reaction is CMP + ATP = CDP + ADP. It carries out the reaction dCMP + ATP = dCDP + ADP. This chain is Cytidylate kinase, found in Salmonella paratyphi B (strain ATCC BAA-1250 / SPB7).